The chain runs to 472 residues: Dihydrolipoyl dehydrogenase 2 (472 aa).

FAD contacts are provided by residues 39–47 (ERDAYGGTC), lysine 56, and alanine 118. The cysteines at positions 47 and 52 are disulfide-linked. NAD(+)-binding positions include 186–190 (GAGYI), glutamate 209, and 275–278 (AVGR). Residues aspartate 318 and alanine 326 each coordinate FAD. Histidine 450 serves as the catalytic Proton acceptor.

It belongs to the class-I pyridine nucleotide-disulfide oxidoreductase family. Homodimer. It depends on FAD as a cofactor.

It is found in the cytoplasm. The catalysed reaction is N(6)-[(R)-dihydrolipoyl]-L-lysyl-[protein] + NAD(+) = N(6)-[(R)-lipoyl]-L-lysyl-[protein] + NADH + H(+). This is Dihydrolipoyl dehydrogenase 2 (lpdA2) from Haloarcula marismortui (strain ATCC 43049 / DSM 3752 / JCM 8966 / VKM B-1809) (Halobacterium marismortui).